The chain runs to 400 residues: Acetate kinase (400 aa).

Asn-10 provides a ligand contact to Mg(2+). Lys-17 lines the ATP pocket. Arg-91 is a substrate binding site. Catalysis depends on Asp-150, which acts as the Proton donor/acceptor. ATP is bound by residues 210 to 214 (HLGNG), 285 to 287 (DCR), and 333 to 337 (GIGEN). Glu-387 is a Mg(2+) binding site.

It belongs to the acetokinase family. In terms of assembly, homodimer. Requires Mg(2+) as cofactor. The cofactor is Mn(2+).

The protein resides in the cytoplasm. It catalyses the reaction acetate + ATP = acetyl phosphate + ADP. Its pathway is metabolic intermediate biosynthesis; acetyl-CoA biosynthesis; acetyl-CoA from acetate: step 1/2. In terms of biological role, catalyzes the formation of acetyl phosphate from acetate and ATP. Can also catalyze the reverse reaction. The polypeptide is Acetate kinase (Escherichia coli O157:H7).